A 635-amino-acid chain; its full sequence is 1-deoxy-D-xylulose-5-phosphate synthase (635 aa).

Thiamine diphosphate-binding positions include H72 and 113–115; that span reads GHA. D144 provides a ligand contact to Mg(2+). Residues 145–146, N174, Y286, and E369 each bind thiamine diphosphate; that span reads GA. Mg(2+) is bound at residue N174.

This sequence belongs to the transketolase family. DXPS subfamily. In terms of assembly, homodimer. Mg(2+) is required as a cofactor. It depends on thiamine diphosphate as a cofactor.

The enzyme catalyses D-glyceraldehyde 3-phosphate + pyruvate + H(+) = 1-deoxy-D-xylulose 5-phosphate + CO2. Its pathway is metabolic intermediate biosynthesis; 1-deoxy-D-xylulose 5-phosphate biosynthesis; 1-deoxy-D-xylulose 5-phosphate from D-glyceraldehyde 3-phosphate and pyruvate: step 1/1. Catalyzes the acyloin condensation reaction between C atoms 2 and 3 of pyruvate and glyceraldehyde 3-phosphate to yield 1-deoxy-D-xylulose-5-phosphate (DXP). This chain is 1-deoxy-D-xylulose-5-phosphate synthase, found in Acaryochloris marina (strain MBIC 11017).